The sequence spans 320 residues: Aspartate carbamoyltransferase catalytic subunit (320 aa).

Residues Arg58 and Thr59 each coordinate carbamoyl phosphate. Lys86 contacts L-aspartate. Carbamoyl phosphate contacts are provided by Arg108, His136, and Gln139. 2 residues coordinate L-aspartate: Arg169 and Arg223. Carbamoyl phosphate is bound by residues Gly264 and Pro265.

It belongs to the aspartate/ornithine carbamoyltransferase superfamily. ATCase family. Heterododecamer (2C3:3R2) of six catalytic PyrB chains organized as two trimers (C3), and six regulatory PyrI chains organized as three dimers (R2).

It carries out the reaction carbamoyl phosphate + L-aspartate = N-carbamoyl-L-aspartate + phosphate + H(+). Its pathway is pyrimidine metabolism; UMP biosynthesis via de novo pathway; (S)-dihydroorotate from bicarbonate: step 2/3. Functionally, catalyzes the condensation of carbamoyl phosphate and aspartate to form carbamoyl aspartate and inorganic phosphate, the committed step in the de novo pyrimidine nucleotide biosynthesis pathway. The chain is Aspartate carbamoyltransferase catalytic subunit from Cereibacter sphaeroides (strain ATCC 17029 / ATH 2.4.9) (Rhodobacter sphaeroides).